Reading from the N-terminus, the 193-residue chain is uncharacterized protein (193 aa).

Residues 1 to 14 form the signal peptide; that stretch reads MSTSLLFSLSPSSS.

This is an uncharacterized protein from Saccharomyces cerevisiae (strain ATCC 204508 / S288c) (Baker's yeast).